A 183-amino-acid chain; its full sequence is tRNA-splicing endonuclease (183 aa).

Catalysis depends on residues Tyr120, His128, and Lys159.

This sequence belongs to the tRNA-intron endonuclease family. Archaeal short subfamily. In terms of assembly, homotetramer; although the tetramer contains four active sites, only two participate in the cleavage. Therefore, it should be considered as a dimer of dimers.

It catalyses the reaction pretRNA = a 3'-half-tRNA molecule with a 5'-OH end + a 5'-half-tRNA molecule with a 2',3'-cyclic phosphate end + an intron with a 2',3'-cyclic phosphate and a 5'-hydroxyl terminus.. Functionally, endonuclease that removes tRNA introns. Cleaves pre-tRNA at the 5'- and 3'-splice sites to release the intron. The products are an intron and two tRNA half-molecules bearing 2',3' cyclic phosphate and 5'-OH termini. Recognizes a pseudosymmetric substrate in which 2 bulged loops of 3 bases are separated by a stem of 4 bp. The protein is tRNA-splicing endonuclease of Pyrobaculum arsenaticum (strain DSM 13514 / JCM 11321 / PZ6).